Here is a 134-residue protein sequence, read N- to C-terminus: Large ribosomal subunit protein eL32 (134 aa).

The protein belongs to the eukaryotic ribosomal protein eL32 family.

The protein is Large ribosomal subunit protein eL32 (RpL32) of Drosophila bifasciata (Fruit fly).